The primary structure comprises 28 residues: Potassium channel toxin alpha-KTx 9.3 (28 aa).

3 disulfide bridges follow: Cys-3/Cys-19, Cys-6/Cys-24, and Cys-10/Cys-26.

The protein belongs to the short scorpion toxin superfamily. Potassium channel inhibitor family. Alpha-KTx 09 subfamily. Expressed by the venom gland.

It localises to the secreted. Its function is as follows. Inhibits voltage-gated potassium channels. The sequence is that of Potassium channel toxin alpha-KTx 9.3 from Aegaeobuthus nigrocinctus (Scorpion).